The chain runs to 482 residues: E3 ubiquitin-protein ligase parkin (482 aa).

Residues 30-99 (LSIYVKTNTG…LGQQSVLHAI (70 aa)) form the Ubiquitin-like domain. The residue at position 94 (serine 94) is a Phosphoserine; by Pink1. Residues 157–246 (AHFFVHCSQC…SGGEKDFAAP (90 aa)) form an RING-type 0; atypical zinc finger. Zn(2+) contacts are provided by cysteine 163, cysteine 166, cysteine 178, and cysteine 181. A Phosphothreonine; by Pink1 modification is found at threonine 187. Residues cysteine 208, cysteine 232, histidine 235, cysteine 259, cysteine 262, cysteine 274, histidine 278, cysteine 281, cysteine 284, cysteine 310, cysteine 314, cysteine 353, cysteine 358, cysteine 373, cysteine 377, cysteine 382, cysteine 385, histidine 390, cysteine 394, cysteine 436, and cysteine 439 each coordinate Zn(2+). Residues 255–482 (KNVPCLACTD…RDCMGAHWFG (228 aa)) are TRIAD supradomain. The segment at 259–314 (CLACTDVSDTVLVFPCASQHVTCIDCFRHYCRSRLGERQFMPHPDFGYTLPCPAGC) adopts an RING-type 1 zinc-finger fold. 2 consecutive IBR-type zinc fingers follow at residues 334 to 394 (DRYQ…IGEC) and 432 to 473 (STKP…EWTR). The RING-type 2; atypical zinc finger occupies 436–467 (CPKCRTPTERDGGCMHMVCTRAGCGFEWCWVC). Residue cysteine 449 is part of the active site. Zn(2+) contacts are provided by cysteine 454, cysteine 459, cysteine 464, cysteine 467, cysteine 475, and histidine 479.

Belongs to the RBR family. Parkin subfamily. Forms an E3 ubiquitin ligase complex with E2 ubiquitin-conjugating enzymes. Interacts with Pink1. Interacts with Marf. Interacts with Paris. Interacts with septins Septin1 and pnut. In terms of processing, auto-ubiquitinates in an E2-dependent manner leading to its own degradation. Phosphorylated. Activation requires phosphorylation at Ser-94 by Pink1 and binding to Pink1-phosphorylated polyubiquitin chains. Phosphorylation at Thr-187 by Pink1 is also important for mitochondrial localization. As to expression, in oocytes, accumulates in early egg chambers where it is enriched until stages 9-10, localizing mainly to the posterior pole and anterior margin (at protein level). After stage 10 it is no longer detected in the oocyte (at protein level). In embryos, ubiquitously expressed in the early stages (stages 2 to 5) (at protein level). Expression levels decrease at later stages and becomes restricted to the brain and nerve cord from stage 9 (at protein level). Relatively higher levels of expression in the head compared to the body. Enriched in the dorsomedial (DM) dopaminergic neurons.

The protein resides in the mitochondrion. The protein localises to the cytoplasm. It is found in the cytosol. The enzyme catalyses [E2 ubiquitin-conjugating enzyme]-S-ubiquitinyl-L-cysteine + [acceptor protein]-L-lysine = [E2 ubiquitin-conjugating enzyme]-L-cysteine + [acceptor protein]-N(6)-ubiquitinyl-L-lysine.. Its pathway is protein modification; protein ubiquitination. With respect to regulation, in the autoinhibited state the side chain of Phe-481 inserts into a hydrophobic groove in RING-0, occluding the ubiquitin acceptor site Cys-449, whereas the REP repressor element binds RING-1 and blocks its E2-binding site. Activation of park requires 2 steps: (1) phosphorylation at Ser-94 by Pink1 and (2) binding to phosphorylated ubiquitin, leading to unlock repression of the catalytic Cys-449 by the RING-0 region via an allosteric mechanism and converting park to its fully-active form. According to another report, phosphorylation at Ser-94 by Pink1 is not essential for activation and only binding to phosphorylated ubiquitin is essential to unlock repression. In terms of biological role, E3 ubiquitin-protein ligase which accepts ubiquitin from E2 ubiquitin-conjugating enzymes in the form of a thioester and then directly transfers the ubiquitin to targeted substrates, such as Paris, Marf, Opa1, Miro, pnut, Septin1, Tom20 and porin. Mediates monoubiquitination as well as 'Lys-6', 'Lys-11', 'Lys-48'-linked and 'Lys-63'-linked polyubiquitination of substrates, depending on the context. Protects against mitochondrial dysfunction during cellular stress, by acting downstream of Pink1, to coordinate mitochondrial quality control mechanisms that remove and replace dysfunctional mitochondrial components. Depending on the severity of mitochondrial damage and/or dysfunction, activity ranges from preventing apoptosis and stimulating mitochondrial biogenesis to regulating mitochondrial dynamics and eliminating severely damaged mitochondria via mitophagy. Appears to be particularly important in maintaining the physiology and function of cells with high energy demands that are undergoing stress or altered metabolic environment, including spermatids, muscle cells and neurons such as the dopaminergic (DA) neurons. Activation and recruitment onto the outer membrane of damaged/dysfunctional mitochondria (OMM) requires Pink1-mediated phosphorylation of both park and ubiquitin. In depolarized mitochondria, mediates the decision between mitophagy or preventing apoptosis by inducing either the poly- or monoubiquitination of porin/VDAC; polyubiquitination of porin promotes mitophagy, while monoubiquitination of porin decreases mitochondrial calcium influx which ultimately inhibits apoptosis. When cellular stress results in irreversible mitochondrial damage, promotes the autophagic degradation of dysfunctional depolarized mitochondria (mitophagy) by promoting the ubiquitination of mitochondrial proteins. Preferentially assembles 'Lys-6'-, 'Lys-11'- and 'Lys-63'-linked polyubiquitin chains following mitochondrial damage, leading to mitophagy. In developing tissues, inhibits JNK-mediated apoptosis by negatively regulating bsk transcription. The Pink1-park pathway also promotes fission and/or inhibits fusion of damaged mitochondria by mediating the ubiquitination and subsequent degradation of proteins involved in mitochondrial fusion/fission such as Marf, Opa1 and fzo. This prevents the refusion of unhealthy mitochondria with the healthy mitochondrial network and/or initiates mitochondrial fragmentation facilitating their later engulfment by autophagosomes. Regulates motility of damaged mitochondria by phosphorylating Miro which likely promotes its park-dependent degradation by the proteasome; in motor neurons, this inhibits mitochondrial intracellular anterograde transport along the axons which probably increases the chance of the mitochondria being eliminated in the soma. The Pink1-park pathway is also involved in mitochondrial regeneration processes such as promoting mitochondrial biogenesis, activating localized mitochondrial repair, promoting selective turnover of mitochondrial proteins and initiating the mitochondrial import of endogenous proteins. Involved in mitochondrial biogenesis via the ubiquitination of transcriptional repressor Paris which leads to its subsequent proteasomal degradation and allows activation of the transcription factor srl. Promotes localized mitochondrial repair by activating the translation of specific nuclear-encoded mitochondrial RNAs (nc-mtRNAs) on the mitochondrial surface, including several key electron transport chain component nc-mtRNAs. This Drosophila melanogaster (Fruit fly) protein is E3 ubiquitin-protein ligase parkin.